The following is a 74-amino-acid chain: Small ribosomal subunit protein eS17 (74 aa).

It belongs to the eukaryotic ribosomal protein eS17 family.

This is Small ribosomal subunit protein eS17 from Aeropyrum pernix (strain ATCC 700893 / DSM 11879 / JCM 9820 / NBRC 100138 / K1).